A 669-amino-acid polypeptide reads, in one-letter code: L-type lectin-domain containing receptor kinase IV.4 (669 aa).

The signal sequence occupies residues M1 to S23. Over Q24–W294 the chain is Extracellular. The segment at I26 to F260 is legume-lectin like. Residues N58, N80, N127, N152, and N185 are each glycosylated (N-linked (GlcNAc...) asparagine). The chain crosses the membrane as a helical span at residues V295–I315. Topologically, residues M316–R669 are cytoplasmic. The region spanning F350–L627 is the Protein kinase domain. Residues L356–V364 and K379 contribute to the ATP site. Residue D475 is the Proton acceptor of the active site.

This sequence in the C-terminal section; belongs to the protein kinase superfamily. Ser/Thr protein kinase family. The protein in the N-terminal section; belongs to the leguminous lectin family.

It is found in the cell membrane. The enzyme catalyses L-seryl-[protein] + ATP = O-phospho-L-seryl-[protein] + ADP + H(+). The catalysed reaction is L-threonyl-[protein] + ATP = O-phospho-L-threonyl-[protein] + ADP + H(+). Its function is as follows. Involved in resistance response to the pathogenic oomycetes Phytophthora infestans and Phytophthora capsici and to the pathogenic bacteria Pseudomonas syringae. This Arabidopsis thaliana (Mouse-ear cress) protein is L-type lectin-domain containing receptor kinase IV.4.